The following is a 194-amino-acid chain: Histone H1.0 (194 aa).

Methionine 1 bears the N-acetylmethionine mark. Positions 1–11 (MTENSTSAPAA) are enriched in low complexity. The segment at 1–29 (MTENSTSAPAAKPKRAKASKKSTDHPKYS) is disordered. An N-acetylthreonine; partial; in Histone H1.0, N-terminally processed modification is found at threonine 2. Asparagine 4 carries the post-translational modification Deamidated asparagine; partial. Residues 24–97 (DHPKYSDMIV…GASGSFRLAK (74 aa)) form the H15 domain. Arginine 42 carries the citrulline modification. The segment at 84–194 (TKGVGASGSF…SSAKRAGKKK (111 aa)) is disordered. Position 104 is an ADP-ribosylserine (serine 104). Residues 105 to 194 (VAFKKTKKEI…SSAKRAGKKK (90 aa)) are compositionally biased toward basic residues.

The protein belongs to the histone H1/H5 family. Post-translationally, phosphorylated on Ser-17 in RNA edited version. ADP-ribosylated on Ser-104 in response to DNA damage.

Its subcellular location is the nucleus. The protein localises to the chromosome. Histones H1 are necessary for the condensation of nucleosome chains into higher-order structures. The histones H1.0 are found in cells that are in terminal stages of differentiation or that have low rates of cell division. This is Histone H1.0 from Homo sapiens (Human).